The primary structure comprises 373 residues: Protein MGF 360-6L (373 aa).

Belongs to the asfivirus MGF 360 family.

Functionally, plays a role in virus cell tropism, and may be required for efficient virus replication in macrophages. The protein is Protein MGF 360-6L of Ornithodoros (relapsing fever ticks).